The chain runs to 178 residues: Ribosomal RNA small subunit methyltransferase G (178 aa).

S-adenosyl-L-methionine contacts are provided by residues G54, L59, 105 to 106 (LE), and R120.

The protein belongs to the methyltransferase superfamily. RNA methyltransferase RsmG family.

Its subcellular location is the cytoplasm. The catalysed reaction is guanosine(527) in 16S rRNA + S-adenosyl-L-methionine = N(7)-methylguanosine(527) in 16S rRNA + S-adenosyl-L-homocysteine. In terms of biological role, specifically methylates the N7 position of guanine in position 527 of 16S rRNA. In Helicobacter acinonychis (strain Sheeba), this protein is Ribosomal RNA small subunit methyltransferase G.